The sequence spans 930 residues: Polypeptide N-acetylgalactosaminyltransferase 5 (930 aa).

At 1-12 the chain is on the cytoplasmic side; the sequence is MNKIRKFFRGSG. A helical; Signal-anchor for type II membrane protein transmembrane segment spans residues 13–35; it reads RVLAFIFVASVIWLLFDMAALRL. Residues 36–930 are Lumenal-facing; it reads SFSEINTGIL…KWKFEKYYDV (895 aa). Residues 163 to 210 are disordered; it reads GSEKDSFTVSRGVPLNKTAEHTETLDKKQEAPENYNLSSDTSKQASQR. N-linked (GlcNAc...) asparagine glycosylation occurs at Asn-178. Basic and acidic residues predominate over residues 180-193; it reads TAEHTETLDKKQEA. Residues 197–210 are compositionally biased toward polar residues; the sequence is YNLSSDTSKQASQR. N-linked (GlcNAc...) asparagine glycosylation is found at Asn-198 and Asn-213. Ser-285 bears the Phosphoserine mark. Residues Asn-287 and Asn-309 are each glycosylated (N-linked (GlcNAc...) asparagine). The tract at residues 344 to 377 is disordered; the sequence is LGESQGKHIPRSQSQTLSSPLAPKRAVSQSKPTL. 2 N-linked (GlcNAc...) asparagine glycosylation sites follow: Asn-387 and Asn-403. Disulfide bonds link Cys-476/Cys-708, Cys-699/Cys-779, and Cys-812/Cys-825. The interval 485–594 is catalytic subdomain A; it reads LPTTSIIMCF…VGWLEPLLER (110 aa). 2 residues coordinate substrate: Asp-526 and Arg-555. Asn-568 is a glycosylation site (N-linked (GlcNAc...) asparagine). Asp-578 serves as a coordination point for Mn(2+). Substrate is bound at residue Ser-579. His-580 serves as a coordination point for Mn(2+). The segment at 654-716 is catalytic subdomain B; sequence IIRCPVMAGG…PCSRVGHIFR (63 aa). Trp-685 lines the substrate pocket. His-713 serves as a coordination point for Mn(2+). Substrate is bound by residues Arg-716 and Tyr-721. Residues Asn-766, Asn-817, and Asn-835 are each glycosylated (N-linked (GlcNAc...) asparagine). Positions 794-925 constitute a Ricin B-type lectin domain; that stretch reads KAPVVRASGV…TEPQQKWKFE (132 aa). 2 disulfide bridges follow: Cys-848-Cys-863 and Cys-898-Cys-913. N-linked (GlcNAc...) asparagine glycosylation is present at Asn-902.

Belongs to the glycosyltransferase 2 family. GalNAc-T subfamily. As to quaternary structure, interacts with EXT2. Does not interact with EXT1, EXTL1 or EXTL3. Requires Mn(2+) as cofactor. Predominantly expressed in sublingual gland. Expressed at lower level in stomach and small intestine. Weakly or not expressed in submandibular gland, parotid gland, kidney, liver, heart, brain, spleen, lung, skeletal muscle, testis, ovary, cervix and uterus.

The protein localises to the golgi apparatus membrane. It carries out the reaction L-seryl-[protein] + UDP-N-acetyl-alpha-D-galactosamine = a 3-O-[N-acetyl-alpha-D-galactosaminyl]-L-seryl-[protein] + UDP + H(+). The catalysed reaction is L-threonyl-[protein] + UDP-N-acetyl-alpha-D-galactosamine = a 3-O-[N-acetyl-alpha-D-galactosaminyl]-L-threonyl-[protein] + UDP + H(+). It functions in the pathway protein modification; protein glycosylation. In terms of biological role, catalyzes the initial reaction in O-linked oligosaccharide biosynthesis, the transfer of an N-acetyl-D-galactosamine residue to a serine or threonine residue on the protein receptor. Has activity toward EA2 peptide substrate, but has a weak activity toward Muc2, Muc1b, rMuc-2 or mG-Muc substrates. In Rattus norvegicus (Rat), this protein is Polypeptide N-acetylgalactosaminyltransferase 5 (Galnt5).